Consider the following 488-residue polypeptide: MAATAWGIRSSGIRGASPVMSACVSPAEVILGADHQQQMYCHLLCGLRRWDAVDCIRAPYAAALARALRLLQSKWRQLCDDLECGTVCADVVTDAAMRGAVQDGVLAGPCPELAGRVRRICERDDWRGVLRQLWPDARYISCVTTGTMEQYFPAIKHFAGEALPVLGTDYLASECAIGINLERTSPPEETTYVLLPRAAYFEFIPFDMDAAGRGAAAAEPVDIAGVEAGKTYELVATTFRGLYRYKVGDVVKIAGFHHSSPRLQFVTRAPPPQEHGEVLTERDVMAAMDTFQLMLKDGGEVIEFAAFIIDGDGGQRRRRCATIAVEVSNGSKLLDHERSAAFLRRCTAPLEGCLGGAYRLSRATGDVAPLEVAVVRPGTFDRLAEAAIRGGAPANQYKPPRSSGTGTSSMCCNPPWCAAAAQSLNQLLTSICLIVSLNQRQFLDRESNSGTDKVFISDSILNFQHWGGFSLRFDLQEESLTLYKDHPS.

It belongs to the IAA-amido conjugating enzyme family. Expressed in roots and callus.

Its function is as follows. May catalyze the synthesis of indole-3-acetic acid (IAA)-amino acid conjugates, providing a mechanism for the plant to cope with the presence of excess auxin. This chain is Probable indole-3-acetic acid-amido synthetase GH3.6 (GH3.6), found in Oryza sativa subsp. japonica (Rice).